Here is a 130-residue protein sequence, read N- to C-terminus: Small ribosomal subunit protein uS8 (130 aa).

This sequence belongs to the universal ribosomal protein uS8 family. In terms of assembly, part of the 30S ribosomal subunit.

Functionally, one of the primary rRNA binding proteins, it binds directly to 16S rRNA central domain where it helps coordinate assembly of the platform of the 30S subunit. In Methanococcus maripaludis (strain C5 / ATCC BAA-1333), this protein is Small ribosomal subunit protein uS8.